We begin with the raw amino-acid sequence, 377 residues long: Chaperone protein DnaJ (377 aa).

A J domain is found at 5–69 (EFYDRLGVSK…QKRSAYDQYG (65 aa)). Residues 133–215 (GVEKDVSYHR…CHGTGHEKET (83 aa)) form a CR-type zinc finger. The Zn(2+) site is built by Cys146, Cys149, Cys163, Cys166, Cys189, Cys192, Cys203, and Cys206. CXXCXGXG motif repeat units follow at residues 146-153 (CHTCAGSG), 163-170 (CGRCHGSG), 189-196 (CDVCHGSG), and 203-210 (CQTCHGTG).

It belongs to the DnaJ family. In terms of assembly, homodimer. Zn(2+) is required as a cofactor.

It localises to the cytoplasm. In terms of biological role, participates actively in the response to hyperosmotic and heat shock by preventing the aggregation of stress-denatured proteins and by disaggregating proteins, also in an autonomous, DnaK-independent fashion. Unfolded proteins bind initially to DnaJ; upon interaction with the DnaJ-bound protein, DnaK hydrolyzes its bound ATP, resulting in the formation of a stable complex. GrpE releases ADP from DnaK; ATP binding to DnaK triggers the release of the substrate protein, thus completing the reaction cycle. Several rounds of ATP-dependent interactions between DnaJ, DnaK and GrpE are required for fully efficient folding. Also involved, together with DnaK and GrpE, in the DNA replication of plasmids through activation of initiation proteins. This is Chaperone protein DnaJ from Streptococcus uberis (strain ATCC BAA-854 / 0140J).